Reading from the N-terminus, the 271-residue chain is Proteasome inhibitor PI31 subunit (271 aa).

Alanine 2 bears the N-acetylalanine mark. The segment at 2-150 is important for homodimerization and interaction with FBXO7; sequence AGLEVLFASA…PIHEQWEKVR (149 aa). Phosphoserine is present on residues serine 153 and serine 189. At arginine 205 the chain carries Omega-N-methylarginine. Arginine 219 is subject to Asymmetric dimethylarginine. Positions 221-271 are disordered; it reads LIDPSSGLPNRLPPGAVPPGARFDPFGPIGTSPSGPNPDHLPPPGYDDMYL. Arginine 231 is subject to Omega-N-methylarginine. Serine 252 is subject to Phosphoserine. The span at 255–265 shows a compositional bias: pro residues; that stretch reads GPNPDHLPPPG.

The protein belongs to the proteasome inhibitor PI31 family. In terms of assembly, monomer and homodimer. Interacts with FBXO7.

The protein resides in the cytoplasm. Its subcellular location is the endoplasmic reticulum. Its function is as follows. Plays an important role in control of proteasome function. Inhibits the hydrolysis of protein and peptide substrates by the 20S proteasome. Also inhibits the activation of the proteasome by the proteasome regulatory proteins PA700 and PA28. This chain is Proteasome inhibitor PI31 subunit (Psmf1), found in Rattus norvegicus (Rat).